Consider the following 257-residue polypeptide: Protein YIPF5 (257 aa).

Residues 1–124 lie on the Cytoplasmic side of the membrane; that stretch reads MSGFENLNTD…KVADGSIMNE (124 aa). The segment at 75 to 106 is interaction with Sec23; that stretch reads PASPQPFYGNNFEDEPPLLEELGINFDHIWQK. Residues 125–145 form a helical membrane-spanning segment; it reads TDLAGPMVFCLAFGATLLLAG. Position 146 (Lys-146) is a topological domain, lumenal. Residues 147–167 traverse the membrane as a helical segment; sequence IQFGYVYGISAIGCLGMFCLL. Residues 168–173 lie on the Cytoplasmic side of the membrane; sequence NLMSMT. The helical transmembrane segment at 174–194 threads the bilayer; it reads GVSFGCVASVLGYCLLPMILL. The Lumenal segment spans residues 195–196; sequence SS. Residues 197-217 form a helical membrane-spanning segment; the sequence is FAVIFSLQGMVGIILTAGIIG. Residues 218-236 are Cytoplasmic-facing; that stretch reads WCSFSASKIFISALAMEGQ. Residues 237-257 traverse the membrane as a helical segment; that stretch reads QLLVAYPCALLYGVFALISVF.

Belongs to the YIP1 family. Interacts with the COPII coat components Sec23 (SEC23A and/or SEC23B) and Sec24 (SEC24A and/or SEC24B). Interacts with YIF1A. May interact with RAB1A. Interacts with YIPF3 and YIPF4. As to expression, ubiquitously expressed with abundant expression in pancreatic tissue, islets, beta cells, and brain. Highly expressed in coronary smooth muscles.

The protein resides in the endoplasmic reticulum membrane. The protein localises to the golgi apparatus. Its subcellular location is the cis-Golgi network membrane. It localises to the cytoplasmic vesicle. It is found in the COPII-coated vesicle. In terms of biological role, plays a role in transport between endoplasmic reticulum and Golgi. In pancreatic beta cells, required to transport proinsulin from endoplasmic reticulum into the Golgi. This Homo sapiens (Human) protein is Protein YIPF5.